We begin with the raw amino-acid sequence, 438 residues long: PHAF1 protein CG7083 (438 aa).

This sequence belongs to the PHAF1 family.

The protein resides in the cytoplasm. It is found in the preautophagosomal structure. Its function is as follows. May play a regulatory role in autophagic activity. In Drosophila melanogaster (Fruit fly), this protein is PHAF1 protein CG7083.